The sequence spans 485 residues: NADH-quinone oxidoreductase subunit N (485 aa).

Transmembrane regions (helical) follow at residues 8 to 28 (LIALLPLLIVGLTVVVVMLSI), 35 to 55 (FLNATLSVIGLNAALVSLWFV), 71 to 91 (GFAMLYTGLVLLASLATCTFA), 105 to 125 (FYLLVLIAALGGILLANANHL), 127 to 147 (SLFLGIELISLPLFGLVGYAF), 159 to 179 (YTILSAAASSFLLFGMALVYA), 203 to 223 (LLAGFGLMIVGLGFKLSLVPF), 235 to 255 (PAPVSTFLATASKIAIFGVVM), 271 to 291 (VVLAIIAFASIIFGNLMALSQ), 297 to 317 (LLGYSSISHLGYLLVALIALQ), 326 to 346 (VGVYLAGYLFSSLGAFGVVSL), 373 to 393 (AAVMTVMMLSLAGIPMTLGFI), 408 to 430 (WWLVGAVVVGSAIGLYYYLRVAV), and 455 to 475 (IVVLISALLVLVLGIWPQPLI).

The protein belongs to the complex I subunit 2 family. As to quaternary structure, NDH-1 is composed of 13 different subunits. Subunits NuoA, H, J, K, L, M, N constitute the membrane sector of the complex.

The protein resides in the cell inner membrane. The catalysed reaction is a quinone + NADH + 5 H(+)(in) = a quinol + NAD(+) + 4 H(+)(out). Functionally, NDH-1 shuttles electrons from NADH, via FMN and iron-sulfur (Fe-S) centers, to quinones in the respiratory chain. The immediate electron acceptor for the enzyme in this species is believed to be ubiquinone. Couples the redox reaction to proton translocation (for every two electrons transferred, four hydrogen ions are translocated across the cytoplasmic membrane), and thus conserves the redox energy in a proton gradient. This chain is NADH-quinone oxidoreductase subunit N, found in Escherichia coli O7:K1 (strain IAI39 / ExPEC).